The following is a 318-amino-acid chain: Cell growth regulator with EF hand domain protein 1 (318 aa).

The N-terminal stretch at 1–19 (MLPLTMTVLILLLLPTGQA) is a signal peptide. 2 consecutive EF-hand domains span residues 69–104 (SREQ…ALAP) and 114–149 (PVIL…ALRH). Ca(2+) contacts are provided by aspartate 82, aspartate 84, serine 86, glutamine 88, glutamate 93, aspartate 127, asparagine 129, aspartate 131, and glutamate 138. The tract at residues 177 to 318 (LRQETQEAPG…HIVQVENDEI (142 aa)) is disordered. Basic and acidic residues-rich tracts occupy residues 186–202 (GPRE…RESL) and 223–233 (GEAEGQAEAKG). Tandem repeats lie at residues 219-235 (PGPR…KGDA), 236-252 (PGPR…EGDA), and 253-269 (PGPR…EGDA). The segment at 219–286 (PGPRGEAEGQ…GGQAEARENG (68 aa)) is 4 X 17 AA approximate tandem repeats of P-G-P-R-G-E-A-G-G-Q-A-E-A-[KR]-G-D-A. The span at 235-272 (APGPRGEAGGQAEAEGDAPGPRGEAGGQAEAEGDAPGP) shows a compositional bias: low complexity. One copy of the 4; approximate repeat lies at 270–286 (PGPRGEAGGQAEARENG). Residues 281–293 (EARENGEEAKELP) show a composition bias toward basic and acidic residues.

Post-translationally, probably digested extracellularly by an unknown serine protease generating extremely hydrophobic bioactive peptides.

The protein resides in the secreted. Mediates cell-cell adhesion in a calcium-dependent manner. Able to inhibit growth in several cell lines. This chain is Cell growth regulator with EF hand domain protein 1, found in Homo sapiens (Human).